The chain runs to 309 residues: MPNETLHIDIGVCTYRRPELAETLRSLAAMNVPERARLRVIVADNDAEPSARALVEGLRPEMPFDILYVHCPHSNISIARNCCLDNSTGDFLAFLDDDETVSGDWLTRLLETARTTGAAAVLGPVRAHYGPTAPRWMRSGDFHSTLPVWAKGEIRTGYTCNALLRRDAASLLGRRFKLSLGKSGGEDTDFFTGMHCAGGTIAFSPEAWVHEPVPENRASLAWLAKRRFRSGQTHGRLLAEKAHGLRQAWNIALAGAKSGFCATAAVLCFPSAARRNRFALRAVLHAGVISGLLGLKEIEQYGAREVTSA.

Belongs to the glycosyltransferase 2 family.

The protein localises to the cell inner membrane. The protein operates within glycan metabolism; exopolysaccharide biosynthesis. Glycosyltransferase required for the synthesis of succinoglycan (EPS I). Needed for the addition of the fourth sugar (glucose), catalyzes the formation of a beta-1,4 linkage between the third acetylated sugar and the fourth sugar. The protein is Succinoglycan biosynthesis protein ExoM (exoM) of Rhizobium meliloti (strain 1021) (Ensifer meliloti).